The chain runs to 406 residues: Cysteine--tRNA ligase (406 aa).

Zn(2+) is bound at residue Cys-16. The 'HIGH' region signature appears at 18–28 (PTVYSDVHIGN). Cys-192, His-218, and Glu-222 together coordinate Zn(2+). The 'KMSKS' region signature appears at 250-254 (KMAKS). Residue Lys-253 participates in ATP binding.

Belongs to the class-I aminoacyl-tRNA synthetase family. In terms of assembly, monomer. It depends on Zn(2+) as a cofactor.

Its subcellular location is the cytoplasm. It catalyses the reaction tRNA(Cys) + L-cysteine + ATP = L-cysteinyl-tRNA(Cys) + AMP + diphosphate. This Mesomycoplasma hyopneumoniae (strain J / ATCC 25934 / NCTC 10110) (Mycoplasma hyopneumoniae) protein is Cysteine--tRNA ligase.